Reading from the N-terminus, the 1107-residue chain is Phospholipid-transporting ATPase 2 (1107 aa).

Over 1-33 (MKRFVYINDDEASKELCCDNRISNRKYTLWNFL) the chain is Cytoplasmic. Residues 34-55 (PKNLWEQFSRFMNQYFLLIACL) form a helical membrane-spanning segment. The Extracellular segment spans residues 56–60 (QLWSL). Residues 61–83 (ITPVNPASTWGPLIFIFAVSASK) form a helical membrane-spanning segment. Residues 84 to 268 (EAWDDYHRYL…TAMDAMIDKL (185 aa)) lie on the Cytoplasmic side of the membrane. A helical membrane pass occupies residues 269–290 (TGAIFVFQIVVVLVLGIAGNVW). Residues 291–315 (KDTEARKQWYVQYPEEAPWYELLVI) lie on the Extracellular side of the membrane. The chain crosses the membrane as a helical span at residues 316–333 (PLRFELLCSIMIPISIKV). Topologically, residues 334–807 (SLDLVKGLYA…HGRYSYNRTA (474 aa)) are cytoplasmic. The 4-aspartylphosphate intermediate role is filled by D381. Positions 752 and 756 each coordinate Mg(2+). Residues 808 to 827 (FLSQYSFYKSLLICFIQIFF) traverse the membrane as a helical segment. Residues 828-841 (SFISGVSGTSLFNS) lie on the Extracellular side of the membrane. A helical transmembrane segment spans residues 842–860 (VSLMAYNVFYTSVPVLVSV). Topologically, residues 861–890 (IDKDLSEASVMQHPQILFYCQAGRLLNPST) are cytoplasmic. Residues 891 to 912 (FAGWFGRSLFHAIIVFVITIHA) traverse the membrane as a helical segment. Residues 913–919 (YAYEKSE) lie on the Extracellular side of the membrane. Residues 920–942 (MEELGMVALSGCIWLQAFVVAQE) traverse the membrane as a helical segment. Residues 943–948 (TNSFTV) lie on the Cytoplasmic side of the membrane. A helical transmembrane segment spans residues 949 to 969 (LQHLSIWGNLVGFYAINFLFS). Residues 970 to 982 (AIPSSGMYTIMFR) lie on the Extracellular side of the membrane. Residues 983–1007 (LCSQPSYWITMFLIVGAGMGPIFAL) form a helical membrane-spanning segment. Over 1008-1107 (KYFRYTYRPS…SGYTRNCKDN (100 aa)) the chain is Cytoplasmic. A disordered region spans residues 1048-1075 (DLSPISITQPKNRSPVYEPLLSDSPNAT). A Phosphoserine modification is found at S1050.

This sequence belongs to the cation transport ATPase (P-type) (TC 3.A.3) family. Type IV subfamily. Interacts with ALIS1, ALIS3 and ALIS5 in a heterologous system.

Its subcellular location is the endoplasmic reticulum membrane. The protein resides in the prevacuolar compartment membrane. It catalyses the reaction ATP + H2O + phospholipidSide 1 = ADP + phosphate + phospholipidSide 2.. Functionally, involved in transport of phospholipids. Contributes to transmembrane flipping of lipids. Requires an interaction with a protein of the ALIS family for activity. Specific for phosphatidylserine and has no activity with lysolipid, phosphatidylcholine or phosphatidylethanolamine. The protein is Phospholipid-transporting ATPase 2 of Arabidopsis thaliana (Mouse-ear cress).